Consider the following 310-residue polypeptide: Homoserine kinase (310 aa).

91-101 serves as a coordination point for ATP; sequence PIGSGLGSSAC.

The protein belongs to the GHMP kinase family. Homoserine kinase subfamily.

The protein localises to the cytoplasm. The catalysed reaction is L-homoserine + ATP = O-phospho-L-homoserine + ADP + H(+). The protein operates within amino-acid biosynthesis; L-threonine biosynthesis; L-threonine from L-aspartate: step 4/5. Its function is as follows. Catalyzes the ATP-dependent phosphorylation of L-homoserine to L-homoserine phosphate. This is Homoserine kinase from Shigella sonnei (strain Ss046).